Here is a 293-residue protein sequence, read N- to C-terminus: NAD kinase (293 aa).

Asp-68 (proton acceptor) is an active-site residue. NAD(+)-binding positions include 68 to 69 (DG), 142 to 143 (ND), Arg-153, Asp-172, and 183 to 188 (TAYSLS).

This sequence belongs to the NAD kinase family. A divalent metal cation is required as a cofactor.

The protein localises to the cytoplasm. It catalyses the reaction NAD(+) + ATP = ADP + NADP(+) + H(+). Involved in the regulation of the intracellular balance of NAD and NADP, and is a key enzyme in the biosynthesis of NADP. Catalyzes specifically the phosphorylation on 2'-hydroxyl of the adenosine moiety of NAD to yield NADP. This Lachnospira eligens (strain ATCC 27750 / DSM 3376 / VPI C15-48 / C15-B4) (Eubacterium eligens) protein is NAD kinase.